The primary structure comprises 428 residues: Enolase (428 aa).

Position 164 (Gln164) interacts with (2R)-2-phosphoglycerate. The Proton donor role is filled by Glu208. Mg(2+) is bound by residues Asp245, Glu286, and Asp313. (2R)-2-phosphoglycerate-binding residues include Lys338, Arg367, Ser368, and Lys389. The active-site Proton acceptor is the Lys338.

Belongs to the enolase family. It depends on Mg(2+) as a cofactor.

It is found in the cytoplasm. The protein resides in the secreted. Its subcellular location is the cell surface. The enzyme catalyses (2R)-2-phosphoglycerate = phosphoenolpyruvate + H2O. It participates in carbohydrate degradation; glycolysis; pyruvate from D-glyceraldehyde 3-phosphate: step 4/5. In terms of biological role, catalyzes the reversible conversion of 2-phosphoglycerate (2-PG) into phosphoenolpyruvate (PEP). It is essential for the degradation of carbohydrates via glycolysis. This Pyrococcus horikoshii (strain ATCC 700860 / DSM 12428 / JCM 9974 / NBRC 100139 / OT-3) protein is Enolase.